A 114-amino-acid polypeptide reads, in one-letter code: MERDISKCMAKIAASMNAKFYLNDRFVSFDEVFSETGLLPAIAKRADQLCSLCLGYGLGATYDESEGALLGIRVVFDEVTPNVLRLLCMTDVMNELIQGGPSRDYTPLDELMYD.

In terms of assembly, the T4BSS is a complex nanomachine composed of several subcomplexes. This subunit is part of the Type IV Coupling Complex (T4CC), a subcomplex composed of the DotLMNYZ core and the IcmSW-LvgA adapter subunits, linked by the C-terminal tail of DotL. Interacts with IcmW. IcmS and IcmW form a stable complex. Interacts directly with the type 4 coupling protein DotL. Interacts with LvgA. Interacts with effector proteins.

It localises to the cytoplasm. With respect to regulation, interaction with DotL is critical for the export of IcmSW-dependent substrates. Functionally, component of the Dot/Icm type IVB secretion system (T4BSS), which is used to inject bacterial effector proteins into eukaryotic host cells. Part of a subcomplex which recruits effector proteins and delivers them to the core transmembrane subcomplex. The IcmS/IcmW protein complex plays an important role in protein translocation by interacting with multiple Dot/Icm effector proteins to facilitate their translocation into host cells. Interaction promotes conformational changes in the effector protein, which may facilitate display of a C-terminal translocation signal. May maintain the substrates in a translocation competent form. Required for intracellular growth in host cells, replicative phagosome formation and phagosome trafficking. IcmS is required for IcmW stability. This is Type 4 adapter protein IcmS from Legionella pneumophila subsp. pneumophila (strain Philadelphia 1 / ATCC 33152 / DSM 7513).